The chain runs to 234 residues: Ribonuclease 3 (234 aa).

Residues Tyr13–Gly136 enclose the RNase III domain. Residue Glu49 participates in Mg(2+) binding. Asp53 is an active-site residue. Ser122 and Glu125 together coordinate Mg(2+). Glu125 is a catalytic residue. Positions Asp163–Gly232 constitute a DRBM domain.

The protein belongs to the ribonuclease III family. Homodimer. Mg(2+) serves as cofactor.

The protein resides in the cytoplasm. It catalyses the reaction Endonucleolytic cleavage to 5'-phosphomonoester.. Its function is as follows. Digests double-stranded RNA. Involved in the processing of primary rRNA transcript to yield the immediate precursors to the large and small rRNAs (23S and 16S). Processes some mRNAs, and tRNAs when they are encoded in the rRNA operon. Processes pre-crRNA and tracrRNA of type II CRISPR loci if present in the organism. This is Ribonuclease 3 from Helicobacter acinonychis (strain Sheeba).